Reading from the N-terminus, the 226-residue chain is ATP synthase F(0) complex subunit a (226 aa).

Helical transmembrane passes span 6 to 26 (FAPF…IMIF), 68 to 88 (WTLM…LGLL), 97 to 117 (QLSM…LMGF), 138 to 158 (IPML…ALAV), 164 to 184 (ITAG…LSSI), and 193 to 213 (FTIL…QAYV).

It belongs to the ATPase A chain family. In terms of assembly, component of the ATP synthase complex composed at least of ATP5F1A/subunit alpha, ATP5F1B/subunit beta, ATP5MC1/subunit c (homooctomer), MT-ATP6/subunit a, MT-ATP8/subunit 8, ATP5ME/subunit e, ATP5MF/subunit f, ATP5MG/subunit g, ATP5MK/subunit k, ATP5MJ/subunit j, ATP5F1C/subunit gamma, ATP5F1D/subunit delta, ATP5F1E/subunit epsilon, ATP5PF/subunit F6, ATP5PB/subunit b, ATP5PD/subunit d, ATP5PO/subunit OSCP. ATP synthase complex consists of a soluble F(1) head domain (subunits alpha(3) and beta(3)) - the catalytic core - and a membrane F(0) domain - the membrane proton channel (subunits c, a, 8, e, f, g, k and j). These two domains are linked by a central stalk (subunits gamma, delta, and epsilon) rotating inside the F1 region and a stationary peripheral stalk (subunits F6, b, d, and OSCP). Interacts with DNAJC30; interaction is direct.

It is found in the mitochondrion inner membrane. The enzyme catalyses H(+)(in) = H(+)(out). Subunit a, of the mitochondrial membrane ATP synthase complex (F(1)F(0) ATP synthase or Complex V) that produces ATP from ADP in the presence of a proton gradient across the membrane which is generated by electron transport complexes of the respiratory chain. ATP synthase complex consist of a soluble F(1) head domain - the catalytic core - and a membrane F(1) domain - the membrane proton channel. These two domains are linked by a central stalk rotating inside the F(1) region and a stationary peripheral stalk. During catalysis, ATP synthesis in the catalytic domain of F(1) is coupled via a rotary mechanism of the central stalk subunits to proton translocation. With the subunit c (ATP5MC1), forms the proton-conducting channel in the F(0) domain, that contains two crucial half-channels (inlet and outlet) that facilitate proton movement from the mitochondrial intermembrane space (IMS) into the matrix. Protons are taken up via the inlet half-channel and released through the outlet half-channel, following a Grotthuss mechanism. This Ornithorhynchus anatinus (Duckbill platypus) protein is ATP synthase F(0) complex subunit a.